The following is a 481-amino-acid chain: Bifunctional protein HldE (481 aa).

The ribokinase stretch occupies residues 1-318 (MKVTLPDFRR…ENAIRGRAET (318 aa)). 195-198 (NLSE) lines the ATP pocket. Residue D264 is part of the active site. A cytidylyltransferase region spans residues 344 to 481 (MTNGIFDILH…KRRAGQRTVV (138 aa)).

In the N-terminal section; belongs to the carbohydrate kinase PfkB family. This sequence in the C-terminal section; belongs to the cytidylyltransferase family. Homodimer.

It catalyses the reaction D-glycero-beta-D-manno-heptose 7-phosphate + ATP = D-glycero-beta-D-manno-heptose 1,7-bisphosphate + ADP + H(+). The catalysed reaction is D-glycero-beta-D-manno-heptose 1-phosphate + ATP + H(+) = ADP-D-glycero-beta-D-manno-heptose + diphosphate. Its pathway is nucleotide-sugar biosynthesis; ADP-L-glycero-beta-D-manno-heptose biosynthesis; ADP-L-glycero-beta-D-manno-heptose from D-glycero-beta-D-manno-heptose 7-phosphate: step 1/4. It participates in nucleotide-sugar biosynthesis; ADP-L-glycero-beta-D-manno-heptose biosynthesis; ADP-L-glycero-beta-D-manno-heptose from D-glycero-beta-D-manno-heptose 7-phosphate: step 3/4. Its function is as follows. Catalyzes the phosphorylation of D-glycero-D-manno-heptose 7-phosphate at the C-1 position to selectively form D-glycero-beta-D-manno-heptose-1,7-bisphosphate. Functionally, catalyzes the ADP transfer from ATP to D-glycero-beta-D-manno-heptose 1-phosphate, yielding ADP-D-glycero-beta-D-manno-heptose. The protein is Bifunctional protein HldE of Sodalis glossinidius (strain morsitans).